The primary structure comprises 478 residues: Aspartyl/glutamyl-tRNA(Asn/Gln) amidotransferase subunit B 2 (478 aa).

The protein belongs to the GatB/GatE family. GatB subfamily. In terms of assembly, heterotrimer of A, B and C subunits.

The catalysed reaction is L-glutamyl-tRNA(Gln) + L-glutamine + ATP + H2O = L-glutaminyl-tRNA(Gln) + L-glutamate + ADP + phosphate + H(+). It carries out the reaction L-aspartyl-tRNA(Asn) + L-glutamine + ATP + H2O = L-asparaginyl-tRNA(Asn) + L-glutamate + ADP + phosphate + 2 H(+). Functionally, allows the formation of correctly charged Asn-tRNA(Asn) or Gln-tRNA(Gln) through the transamidation of misacylated Asp-tRNA(Asn) or Glu-tRNA(Gln) in organisms which lack either or both of asparaginyl-tRNA or glutaminyl-tRNA synthetases. The reaction takes place in the presence of glutamine and ATP through an activated phospho-Asp-tRNA(Asn) or phospho-Glu-tRNA(Gln). This Clostridium acetobutylicum (strain ATCC 824 / DSM 792 / JCM 1419 / IAM 19013 / LMG 5710 / NBRC 13948 / NRRL B-527 / VKM B-1787 / 2291 / W) protein is Aspartyl/glutamyl-tRNA(Asn/Gln) amidotransferase subunit B 2 (gatB2).